The sequence spans 90 residues: MANHKSTQKSIRQDQKRNLINKSRKSNVKTFLKRVTLAINAGDKKVASEALSAAHSKLAKAANKGIFKLNTVSRKVSRLSRKIKQLEDKI.

Residues 1 to 10 show a composition bias toward polar residues; that stretch reads MANHKSTQKS. Residues 1 to 25 are disordered; that stretch reads MANHKSTQKSIRQDQKRNLINKSRK.

Belongs to the bacterial ribosomal protein bS20 family.

Binds directly to 16S ribosomal RNA. The sequence is that of Small ribosomal subunit protein bS20 from Orientia tsutsugamushi (strain Boryong) (Rickettsia tsutsugamushi).